The following is a 179-amino-acid chain: MSRIGKRPIEIPSGVKVSYVTPILKVEGPKGSLLREIMSDIALEIEEKSVSVNRADDAIKSRSAHGLTRTLINNMVVGVTKGFEKILEINGVGYRAEAKGDVLSLSLGYSHPINFPLPKGITVEVDKMTKVFVRGIDKELVGQTAAKIRSFRGPEPYKGKGIKYADERILRKAGKTGKK.

It belongs to the universal ribosomal protein uL6 family. In terms of assembly, part of the 50S ribosomal subunit.

Its function is as follows. This protein binds to the 23S rRNA, and is important in its secondary structure. It is located near the subunit interface in the base of the L7/L12 stalk, and near the tRNA binding site of the peptidyltransferase center. In Geobacter metallireducens (strain ATCC 53774 / DSM 7210 / GS-15), this protein is Large ribosomal subunit protein uL6.